The following is a 523-amino-acid chain: 2-isopropylmalate synthase (523 aa).

The Pyruvate carboxyltransferase domain maps to 5–267; that stretch reads VIIFDTTLRD…HTAINHQEIW (263 aa). Positions 14, 202, 204, and 238 each coordinate Mn(2+). Positions 392–523 are regulatory domain; that stretch reads RLDYFSVQSS…QHNENNKETV (132 aa).

This sequence belongs to the alpha-IPM synthase/homocitrate synthase family. LeuA type 1 subfamily. As to quaternary structure, homodimer. Mn(2+) is required as a cofactor.

It is found in the cytoplasm. The enzyme catalyses 3-methyl-2-oxobutanoate + acetyl-CoA + H2O = (2S)-2-isopropylmalate + CoA + H(+). Its pathway is amino-acid biosynthesis; L-leucine biosynthesis; L-leucine from 3-methyl-2-oxobutanoate: step 1/4. Catalyzes the condensation of the acetyl group of acetyl-CoA with 3-methyl-2-oxobutanoate (2-ketoisovalerate) to form 3-carboxy-3-hydroxy-4-methylpentanoate (2-isopropylmalate). This is 2-isopropylmalate synthase from Shigella dysenteriae serotype 1 (strain Sd197).